The primary structure comprises 407 residues: L-cysteine:1D-myo-inositol 2-amino-2-deoxy-alpha-D-glucopyranoside ligase (407 aa).

C43 serves as a coordination point for Zn(2+). L-cysteinyl-5'-AMP is bound by residues 43-46 (CGIT), T58, and 81-83 (NAT). Positions 45 to 55 (ITPYDATHLGH) match the 'HIGH' region motif. The short motif at 183–188 (QRGGDP) is the 'ERGGDP' region element. An L-cysteinyl-5'-AMP-binding site is contributed by W223. C227 is a Zn(2+) binding site. Residue 245–247 (GSD) coordinates L-cysteinyl-5'-AMP. H252 serves as a coordination point for Zn(2+). V279 is a binding site for L-cysteinyl-5'-AMP. Residues 285-289 (KMSKS) carry the 'KMSKS' region motif.

It belongs to the class-I aminoacyl-tRNA synthetase family. MshC subfamily. Monomer. Requires Zn(2+) as cofactor.

It carries out the reaction 1D-myo-inositol 2-amino-2-deoxy-alpha-D-glucopyranoside + L-cysteine + ATP = 1D-myo-inositol 2-(L-cysteinylamino)-2-deoxy-alpha-D-glucopyranoside + AMP + diphosphate + H(+). Functionally, catalyzes the ATP-dependent condensation of GlcN-Ins and L-cysteine to form L-Cys-GlcN-Ins. The sequence is that of L-cysteine:1D-myo-inositol 2-amino-2-deoxy-alpha-D-glucopyranoside ligase from Streptosporangium roseum (strain ATCC 12428 / DSM 43021 / JCM 3005 / KCTC 9067 / NCIMB 10171 / NRRL 2505 / NI 9100).